The chain runs to 439 residues: Homogentisate 1,2-dioxygenase (439 aa).

The Proton acceptor role is filled by histidine 289. 2 residues coordinate Fe cation: histidine 332 and glutamate 338. 2 residues coordinate homogentisate: tyrosine 347 and histidine 368. Fe cation is bound at residue histidine 368.

The protein belongs to the homogentisate dioxygenase family. In terms of assembly, hexamer; dimer of trimers. It depends on Fe cation as a cofactor.

It catalyses the reaction homogentisate + O2 = 4-maleylacetoacetate + H(+). The protein operates within amino-acid degradation; L-phenylalanine degradation; acetoacetate and fumarate from L-phenylalanine: step 4/6. Involved in the catabolism of homogentisate (2,5-dihydroxyphenylacetate or 2,5-OH-PhAc), a central intermediate in the degradation of phenylalanine and tyrosine. Catalyzes the oxidative ring cleavage of the aromatic ring of homogentisate to yield maleylacetoacetate. The protein is Homogentisate 1,2-dioxygenase of Xanthomonas euvesicatoria pv. vesicatoria (strain 85-10) (Xanthomonas campestris pv. vesicatoria).